Here is a 271-residue protein sequence, read N- to C-terminus: NADPH-dependent 7-cyano-7-deazaguanine reductase (271 aa).

81-83 is a binding site for substrate; sequence IES. NADPH is bound at residue 83-84; that stretch reads SK. Cys-177 acts as the Thioimide intermediate in catalysis. Asp-184 functions as the Proton donor in the catalytic mechanism. 216–217 is a substrate binding site; the sequence is HE. 245–246 contributes to the NADPH binding site; that stretch reads RG.

Belongs to the GTP cyclohydrolase I family. QueF type 2 subfamily. Homodimer.

The protein resides in the cytoplasm. The enzyme catalyses 7-aminomethyl-7-carbaguanine + 2 NADP(+) = 7-cyano-7-deazaguanine + 2 NADPH + 3 H(+). It functions in the pathway tRNA modification; tRNA-queuosine biosynthesis. Functionally, catalyzes the NADPH-dependent reduction of 7-cyano-7-deazaguanine (preQ0) to 7-aminomethyl-7-deazaguanine (preQ1). This chain is NADPH-dependent 7-cyano-7-deazaguanine reductase, found in Xanthomonas campestris pv. campestris (strain B100).